A 478-amino-acid polypeptide reads, in one-letter code: Trigger factor (478 aa).

The span at 154 to 167 (MAKDSRSFEPREEG) shows a compositional bias: basic and acidic residues. 2 disordered regions span residues 154-173 (MAKD…AQSG) and 444-478 (LFAE…KAAG). A PPIase FKBP-type domain is found at 173–258 (GDRVTIDFVG…VKAVAAPGET (86 aa)).

This sequence belongs to the FKBP-type PPIase family. Tig subfamily.

The protein resides in the cytoplasm. It carries out the reaction [protein]-peptidylproline (omega=180) = [protein]-peptidylproline (omega=0). In terms of biological role, involved in protein export. Acts as a chaperone by maintaining the newly synthesized protein in an open conformation. Functions as a peptidyl-prolyl cis-trans isomerase. The polypeptide is Trigger factor (Methylorubrum populi (strain ATCC BAA-705 / NCIMB 13946 / BJ001) (Methylobacterium populi)).